A 151-amino-acid chain; its full sequence is Small ribosomal subunit protein uS19 (151 aa).

This sequence belongs to the universal ribosomal protein uS19 family.

In terms of biological role, protein S19 forms a complex with S13 that binds strongly to the 16S ribosomal RNA. The protein is Small ribosomal subunit protein uS19 (rps19) of Thermoplasma acidophilum (strain ATCC 25905 / DSM 1728 / JCM 9062 / NBRC 15155 / AMRC-C165).